We begin with the raw amino-acid sequence, 128 residues long: uncharacterized protein (128 aa).

The interval 25-61 (LPNRLPEGSTVGPKPDSSWEAGSQGNWGLTSSGAGQD) is disordered. Polar residues predominate over residues 44-61 (EAGSQGNWGLTSSGAGQD).

This is an uncharacterized protein from Homo sapiens (Human).